Here is a 382-residue protein sequence, read N- to C-terminus: Na(+)/H(+) antiporter NhaA 2 (382 aa).

11 consecutive transmembrane segments (helical) span residues 8–28, 49–69, 87–107, 115–135, 146–166, 169–189, 209–229, 252–272, 286–306, 325–345, and 353–373; these read FFSS…AAII, LSVE…MVGL, ALPG…YVWF, LAGW…VLAL, IFLS…IALF, SNIS…LFIM, FFML…ALFI, WVTF…ALSG, VALG…LLAV, VSVL…LAFA, and EVKV…MLIL.

This sequence belongs to the NhaA Na(+)/H(+) (TC 2.A.33) antiporter family.

It is found in the cell inner membrane. The catalysed reaction is Na(+)(in) + 2 H(+)(out) = Na(+)(out) + 2 H(+)(in). Na(+)/H(+) antiporter that extrudes sodium in exchange for external protons. The sequence is that of Na(+)/H(+) antiporter NhaA 2 from Klebsiella pneumoniae subsp. pneumoniae (strain ATCC 700721 / MGH 78578).